We begin with the raw amino-acid sequence, 344 residues long: Phenylalanine--tRNA ligase alpha subunit (344 aa).

A Mg(2+)-binding site is contributed by Glu256.

Belongs to the class-II aminoacyl-tRNA synthetase family. Phe-tRNA synthetase alpha subunit type 1 subfamily. Tetramer of two alpha and two beta subunits. The cofactor is Mg(2+).

Its subcellular location is the cytoplasm. It catalyses the reaction tRNA(Phe) + L-phenylalanine + ATP = L-phenylalanyl-tRNA(Phe) + AMP + diphosphate + H(+). The chain is Phenylalanine--tRNA ligase alpha subunit (pheS) from Halalkalibacterium halodurans (strain ATCC BAA-125 / DSM 18197 / FERM 7344 / JCM 9153 / C-125) (Bacillus halodurans).